A 149-amino-acid polypeptide reads, in one-letter code: UPAR/Ly6 domain-containing protein bou (149 aa).

Residues 1–31 (MWPPKHAHIGWLSSLALVVLLMSLQMVMVSG) form the signal peptide. At 32 to 126 (IECYVCDTSD…YTCDTDGCNA (95 aa)) the chain is on the extracellular side. 5 disulfides stabilise this stretch: Cys-34–Cys-74, Cys-37–Cys-48, Cys-65–Cys-91, Cys-100–Cys-115, and Cys-119–Cys-124. Residue Asn-64 is glycosylated (N-linked (GlcNAc...) asparagine). Asn-125 carries the GPI-anchor amidated asparagine lipid modification. A propeptide spans 126–149 (AAGRLELEWGVAAALLTLTWLLRH) (removed in mature form). A helical transmembrane segment spans residues 127–147 (AGRLELEWGVAAALLTLTWLL). Over 148 to 149 (RH) the chain is Cytoplasmic.

In terms of processing, GPI-anchored.

It is found in the cell membrane. The protein localises to the cell junction. Its subcellular location is the septate junction. The protein resides in the cytoplasm. It localises to the cell cortex. It is found in the secreted. The protein localises to the apicolateral cell membrane. In terms of biological role, involved in tracheal paracellular barrier functions mediated by epithelial cell septate junctions. Involved in paracellular barrier functions mediated by glial cell septate junctions in the peripheral nervous system, including the chordotonal organs, but not the hemolymph-brain barrier (the insect blood-brain barrier) of the central nervous system. Required for septate junction assembly, possibly by organizing the preassembly and transport of septate junction proteins such as dlg1/disks large 1, Nrx-IV/Neurexin-IV and the claudin protein kune. Involved in chitin fiber organization during tracheal development. Secreted, possibly in association with extracellular vesicles, to act non-autonomously on tissues distant from its site of expression. The protein is UPAR/Ly6 domain-containing protein bou of Drosophila melanogaster (Fruit fly).